A 187-amino-acid chain; its full sequence is Large ribosomal subunit protein bL17 (187 aa).

The segment at 122–187 (PKVRSSRTST…EADAAEKSDK (66 aa)) is disordered. Low complexity predominate over residues 127-144 (SRTSTATAPVAAAPVAEA). The span at 145-157 (PAEESDVPVEETD) shows a compositional bias: acidic residues. Over residues 167–176 (AETTDAAAAE) the composition is skewed to low complexity.

This sequence belongs to the bacterial ribosomal protein bL17 family. In terms of assembly, part of the 50S ribosomal subunit. Contacts protein L32.

This is Large ribosomal subunit protein bL17 from Clavibacter sepedonicus (Clavibacter michiganensis subsp. sepedonicus).